The chain runs to 182 residues: Thioredoxin F-type, chloroplastic (182 aa).

A chloroplast-targeting transit peptide spans 1–69 (MALNLCTSPK…SVRSSLETAG (69 aa)). Residues 70-181 (PTVTVGKVTE…LVAAIDTVRS (112 aa)) form the Thioredoxin domain. Catalysis depends on nucleophile residues Cys-106 and Cys-109. A disulfide bridge connects residues Cys-106 and Cys-109.

Belongs to the thioredoxin family. Plant F-type subfamily. As to quaternary structure, forms a complex with heterodimeric ferredoxin-thioredoxin reductase (FTR) and ferredoxin.

The protein localises to the plastid. It localises to the chloroplast. Its function is as follows. Participates in various redox reactions through the reversible oxidation of the active center dithiol to a disulfide. The F form is known to activate a number of enzymes of the photosynthetic carbon cycle. The chain is Thioredoxin F-type, chloroplastic from Pisum sativum (Garden pea).